Reading from the N-terminus, the 229-residue chain is Probable endo-1,4-beta-xylanase A (229 aa).

The signal sequence occupies residues 1–18; it reads MVSFKYLFLAASALGALA. N-linked (GlcNAc...) asparagine glycans are attached at residues Asn30 and Asn100. In terms of domain architecture, GH11 spans 41–229; it reads AGTPSSTGWN…SSGSSSITVY (189 aa). The active-site Nucleophile is Glu125. The active-site Proton donor is the Glu216.

It belongs to the glycosyl hydrolase 11 (cellulase G) family.

It is found in the secreted. It carries out the reaction Endohydrolysis of (1-&gt;4)-beta-D-xylosidic linkages in xylans.. It functions in the pathway glycan degradation; xylan degradation. Endo-1,4-beta-xylanase involved in the hydrolysis of xylan, a major structural heterogeneous polysaccharide found in plant biomass representing the second most abundant polysaccharide in the biosphere, after cellulose. In Aspergillus clavatus (strain ATCC 1007 / CBS 513.65 / DSM 816 / NCTC 3887 / NRRL 1 / QM 1276 / 107), this protein is Probable endo-1,4-beta-xylanase A (xlnA).